Consider the following 124-residue polypeptide: UPF0231 protein Sama_0645 (124 aa).

The protein belongs to the UPF0231 family.

In Shewanella amazonensis (strain ATCC BAA-1098 / SB2B), this protein is UPF0231 protein Sama_0645.